Consider the following 453-residue polypeptide: Kynureninase (453 aa).

Pyridoxal 5'-phosphate contacts are provided by residues Leu111, Thr112, 139–142 (FPSD), Ser196, Asp226, His229, and Tyr251. Lys252 bears the N6-(pyridoxal phosphate)lysine mark. Positions 286 and 314 each coordinate pyridoxal 5'-phosphate.

The protein belongs to the kynureninase family. In terms of assembly, homodimer. The cofactor is pyridoxal 5'-phosphate.

It localises to the cytoplasm. Its subcellular location is the nucleus. The catalysed reaction is L-kynurenine + H2O = anthranilate + L-alanine + H(+). It catalyses the reaction 3-hydroxy-L-kynurenine + H2O = 3-hydroxyanthranilate + L-alanine + H(+). It participates in amino-acid degradation; L-kynurenine degradation; L-alanine and anthranilate from L-kynurenine: step 1/1. It functions in the pathway cofactor biosynthesis; NAD(+) biosynthesis; quinolinate from L-kynurenine: step 2/3. Functionally, catalyzes the cleavage of L-kynurenine (L-Kyn) and L-3-hydroxykynurenine (L-3OHKyn) into anthranilic acid (AA) and 3-hydroxyanthranilic acid (3-OHAA), respectively. This Saccharomyces cerevisiae (strain ATCC 204508 / S288c) (Baker's yeast) protein is Kynureninase.